Here is a 365-residue protein sequence, read N- to C-terminus: MADQDQLKALRLRIDSLDEKLLELISERARCAQDVARVKTQTLGEGEAPVFYRPEREAWVLKHIMQLNKGPLDNEEVARLFREIMSSCLALEQPLKVAYLGPEGTFTQAAALKHFGNAVISTPMAAIDEVFREVAAGAVNFGVVPVENSTEGAVNHTLDSFLEHDMVICGEVELRIHHHLLVGETTKTDNITRIYSHAQSLAQCRKWLDSHYPSVERVAVSSNADAAKRVKSEWNSAAIAGDMAASLYDLSKLHEKIEDRPDNSTRFLIIGNQEVPPTGDDKTSIIVSMRNKPGALHELLVPFHNNGIDLTRIETRPSRSGKWTYVFFIDFVGHHKEPLIKDVLEKIGQEAVALKVLGSYPKAVL.

Residues Met-1–Lys-96 enclose the Chorismate mutase domain. 4 residues coordinate substrate: Arg-11, Arg-28, Lys-39, and Glu-57. The Prephenate dehydratase domain occupies Val-97 to Asn-272. In terms of domain architecture, ACT spans Ser-284–Pro-361.

Its subcellular location is the cytoplasm. The enzyme catalyses chorismate = prephenate. It catalyses the reaction prephenate + H(+) = 3-phenylpyruvate + CO2 + H2O. It participates in amino-acid biosynthesis; L-phenylalanine biosynthesis; phenylpyruvate from prephenate: step 1/1. The protein operates within metabolic intermediate biosynthesis; prephenate biosynthesis; prephenate from chorismate: step 1/1. Functionally, catalyzes the Claisen rearrangement of chorismate to prephenate and the decarboxylation/dehydration of prephenate to phenylpyruvate. This is Bifunctional chorismate mutase/prephenate dehydratase (pheA) from Pseudomonas aeruginosa (strain ATCC 15692 / DSM 22644 / CIP 104116 / JCM 14847 / LMG 12228 / 1C / PRS 101 / PAO1).